A 574-amino-acid chain; its full sequence is Phosphoenolpyruvate-protein phosphotransferase (574 aa).

H190 serves as the catalytic Tele-phosphohistidine intermediate. Phosphoenolpyruvate contacts are provided by R297 and R333. Mg(2+) contacts are provided by E432 and D456. Phosphoenolpyruvate-binding positions include 455–456 and R466; that span reads ND. The active-site Proton donor is the C503.

Belongs to the PEP-utilizing enzyme family. As to quaternary structure, homodimer. Mg(2+) serves as cofactor.

The protein localises to the cytoplasm. It carries out the reaction L-histidyl-[protein] + phosphoenolpyruvate = N(pros)-phospho-L-histidyl-[protein] + pyruvate. Its function is as follows. General (non sugar-specific) component of the phosphoenolpyruvate-dependent sugar phosphotransferase system (sugar PTS). This major carbohydrate active-transport system catalyzes the phosphorylation of incoming sugar substrates concomitantly with their translocation across the cell membrane. Enzyme I transfers the phosphoryl group from phosphoenolpyruvate (PEP) to the phosphoryl carrier protein (HPr). The polypeptide is Phosphoenolpyruvate-protein phosphotransferase (ptsI) (Latilactobacillus sakei (Lactobacillus sakei)).